The following is a 157-amino-acid chain: Methylglyoxal synthase (157 aa).

Residues 1–157 (MSKVKNIAVV…DFSSYTQRKL (157 aa)) form the MGS-like domain. Residues His-12, Lys-16, 38 to 41 (TGTT), and 71 to 72 (SG) each bind substrate. The Proton donor/acceptor role is filled by Asp-77. His-104 contributes to the substrate binding site.

Belongs to the methylglyoxal synthase family.

The catalysed reaction is dihydroxyacetone phosphate = methylglyoxal + phosphate. Catalyzes the formation of methylglyoxal from dihydroxyacetone phosphate. This is Methylglyoxal synthase from Maridesulfovibrio salexigens (strain ATCC 14822 / DSM 2638 / NCIMB 8403 / VKM B-1763) (Desulfovibrio salexigens).